A 376-amino-acid chain; its full sequence is Fibromodulin (376 aa).

The signal sequence occupies residues 1-18 (MQWASILLLAGLCSLSWA). At Gln19 the chain carries Pyrrolidone carboxylic acid. 9 positions are modified to sulfotyrosine: Tyr20, Tyr38, Tyr45, Tyr47, Tyr50, Tyr53, Tyr55, Tyr63, and Tyr65. The 39-residue stretch at 67–105 (SPPQPEPRDCPQECDCPPNFPTAMYCDNRNLKYLPFVPS) folds into the LRRNT domain. LRR repeat units follow at residues 106 to 127 (RMKY…VFDN), 130 to 151 (GLLW…KKVF), 156 to 176 (HLER…PLPR), 177 to 198 (SLRE…ALEG), 201 to 222 (NLTA…MKGL), 224 to 245 (SLIL…LPSA), 246 to 266 (LEQL…YFRG), and 269 to 289 (KLLY…ASNT). Asn127 is a glycosylation site (N-linked (GlcNAc...) (keratan sulfate) asparagine). The N-linked (GlcNAc...) (keratan sulfate) asparagine glycan is linked to Asn166. Asn201 carries N-linked (GlcNAc...) (keratan sulfate) asparagine glycosylation. N-linked (GlcNAc...) (keratan sulfate) asparagine glycosylation is present at Asn291. LRR repeat units follow at residues 294–315 (SLLE…STNL) and 316–335 (ENLY…SFCT). A disulfide bridge links Cys334 with Cys367. Asn341 carries an N-linked (GlcNAc...) asparagine glycan. Residues 344–365 (KLQVLRLDGNEIKRSAMPADAP) form an LRR 11 repeat.

Belongs to the small leucine-rich proteoglycan (SLRP) family. SLRP class II subfamily. Binds to type I and type II collagen. In terms of processing, binds keratan sulfate chains.

The protein localises to the secreted. The protein resides in the extracellular space. It localises to the extracellular matrix. Its function is as follows. Affects the rate of fibrils formation. May have a primary role in collagen fibrillogenesis. In Bos taurus (Bovine), this protein is Fibromodulin (FMOD).